A 102-amino-acid chain; its full sequence is MKCATIVCTIAVVLAATLLNGSVQAAPQEEAALSGGANLNTLLDELPEETHHAALENYRAKRATCDLASGFGVGSSLCAAHCIARRYRGGYCNSKAVCVCRN.

The N-terminal stretch at 1–25 (MKCATIVCTIAVVLAATLLNGSVQA) is a signal peptide. Residues 26–62 (APQEEAALSGGANLNTLLDELPEETHHAALENYRAKR) constitute a propeptide that is removed on maturation. Disulfide bonds link Cys65–Cys92, Cys78–Cys98, and Cys82–Cys100.

This sequence belongs to the invertebrate defensin family. Type 1 subfamily.

It localises to the secreted. In terms of biological role, responsible for the anti Gram-positive activity of immune hemolymph. This Anopheles gambiae (African malaria mosquito) protein is Defensin (Def1).